The sequence spans 260 residues: UPF0246 protein APJL_0596 (260 aa).

It belongs to the UPF0246 family.

This chain is UPF0246 protein APJL_0596, found in Actinobacillus pleuropneumoniae serotype 3 (strain JL03).